Consider the following 615-residue polypeptide: Sodium-dependent noradrenaline transporter (615 aa).

Positions 1–28 (MLLARMNPQVQPENGGAGPGSEQPPRKR) are disordered. Topologically, residues 1–60 (MLLARMNPQVQPENGGAGPGSEQPPRKRKEVLVVKERNGVQCLLASRDGDEQPRETWGKK) are cytoplasmic. Residues 61–86 (IDFLLSVVGFAVDLANVWRFPYLCYK) traverse the membrane as a helical segment. Residues Gly69, Ala71, and Val72 each contribute to the Na(+) site. A (R)-noradrenaline-binding site is contributed by Asp73. Asp73 lines the dopamine pocket. Residue Asn76 participates in Na(+) binding. Residues Tyr85 and Lys86 each coordinate (R)-noradrenaline. Residues 87-90 (NGGG) are Extracellular-facing. The helical transmembrane segment at 91 to 114 (AFLIPYTLFLIIAGMPLFYMELAL) threads the bilayer. Residues 115–133 (GQYNREGAATVWKICPFFK) lie on the Cytoplasmic side of the membrane. A helical transmembrane segment spans residues 134 to 164 (GVGYAVILIALYVGFYYNVIIAWSLYYLFSS). Positions 143 and 147 each coordinate (R)-noradrenaline. Ala143 is a binding site for dopamine. At 165–231 (FTPTLPWTDC…SSGIHDIGLP (67 aa)) the chain is on the extracellular side. Cys174 and Cys183 are disulfide-bonded. Asn182, Asn190, and Asn196 each carry an N-linked (GlcNAc...) asparagine glycan. Residues 232–252 (QWQLLLCLIIVVIVLFFSLWK) traverse the membrane as a helical segment. The Cytoplasmic portion of the chain corresponds to 253-255 (GVK). Residues 256-280 (TSGKVVWITATLPYLVLFVLLVHGI) traverse the membrane as a helical segment. Residues 281–304 (TLPGASNGINAYLHIDFYRLKEAT) lie on the Extracellular side of the membrane. A helical membrane pass occupies residues 305 to 330 (VWIDAATQIFFSLGAGFGVLIAFASY). Position 315 (Phe315) interacts with (R)-noradrenaline. Phe315 is a dopamine binding site. Na(+) is bound at residue Ser316. Residues 331 to 336 (NKFDNN) lie on the Cytoplasmic side of the membrane. Residues 337-360 (CYRDALLTSTINCVTSFISGFAIF) traverse the membrane as a helical segment. Residue Asn348 coordinates Na(+). The Extracellular segment spans residues 361 to 400 (SILGYMAHEHKVNIEDVATEGAGLVFILYPEAISTLSGST). A (R)-noradrenaline-binding site is contributed by Glu380. Residue Glu380 coordinates dopamine. Residues 401–426 (FWAIVFFIMLLALGIDSSMGGMEAVI) traverse the membrane as a helical segment. Residues Asp416 and Ser417 each contribute to the Na(+) site. Residues 427-441 (TGLADDFQVLKRHRK) lie on the Cytoplasmic side of the membrane. The helical transmembrane segment at 442-462 (LFTFAVSFGTFLLALFCITKG) threads the bilayer. Position 463 (Gly463) is a topological domain, extracellular. A helical membrane pass occupies residues 464-490 (IYVLTLLDTFAAGTSILFAVLMEAIGV). The Cytoplasmic segment spans residues 491-520 (SWFYGVDRFSNDIQQMMGFKPGLYWRLCWK). The helical transmembrane segment at 521-543 (FVSPAFLLFVVIVSIINFKPLTY) threads the bilayer. Residues 544–546 (DDY) lie on the Extracellular side of the membrane. A helical membrane pass occupies residues 547–567 (IFPLWANWVGWGIAGSSMVLV). At 568–615 (PAYIVYKFFSTRGSIRERLAYGITPASEHHLVAQRDIRQFQLQHWLAI) the chain is on the cytoplasmic side.

Belongs to the sodium:neurotransmitter symporter (SNF) (TC 2.A.22) family. SLC6A2 subfamily. As to quaternary structure, monomer. Can form homodimers in the cell membrane; homodimerization is mostly mediated by cholesterol and lipids, and regulates neurotransmitter transport activity. Interacts with PRKCABP. Post-translationally, palmitoylated. Palmitoylation regulates protein levels and neurotransmitter transport.

Its subcellular location is the cell membrane. The protein localises to the cell projection. The protein resides in the axon. It is found in the synapse. It localises to the synaptosome. The catalysed reaction is (R)-noradrenaline(out) + chloride(out) + Na(+)(out) = (R)-noradrenaline(in) + chloride(in) + Na(+)(in). It catalyses the reaction dopamine(out) + chloride(out) + Na(+)(out) = dopamine(in) + chloride(in) + Na(+)(in). It carries out the reaction dopamine(out) + chloride(out) + 2 Na(+)(out) = dopamine(in) + chloride(in) + 2 Na(+)(in). Inhibited by nisoxetine, oxaprotiline and desipramin. Functionally, mediates sodium- and chloride-dependent transport of norepinephrine (also known as noradrenaline), the primary signaling neurotransmitter in the autonomic sympathetic nervous system. Is responsible for norepinephrine re-uptake and clearance from the synaptic cleft, thus playing a crucial role in norepinephrine inactivation and homeostasis. Can also mediate sodium- and chloride-dependent transport of dopamine. This chain is Sodium-dependent noradrenaline transporter (SLC6A2), found in Bos taurus (Bovine).